The primary structure comprises 418 residues: Protein-lysine 6-oxidase (418 aa).

Positions 1–20 (MRFAWTALLGSLQLCALVRC) are cleaved as a signal peptide. Residues 21–169 (APPAASHRQP…NRVEVDGMVG (149 aa)) constitute a propeptide, removed by BMP1. The disordered stretch occupies residues 63-84 (YQPQRRRDPGATAPGAANATAP). Positions 72–84 (GATAPGAANATAP) are enriched in low complexity. N-linked (GlcNAc...) asparagine glycosylation is found at N80, N96, and N143. The disordered stretch occupies residues 130 to 175 (TSGAHDAGTSRADNQTAPGEVPTLSNLRPPNRVEVDGMVGDDPYNP). The span at 140–157 (RADNQTAPGEVPTLSNLR) shows a compositional bias: polar residues. The residue at position 188 (Y188) is a Sulfotyrosine. A lysyl-oxidase like region spans residues 214-418 (PDLVPDPYYI…YASGCTISPY (205 aa)). 5 disulfides stabilise this stretch: C239/C245, C292/C341, C325/C331, C352/C362, and C399/C413. Cu cation is bound by residues H293, H295, and H297. A cross-link (lysine tyrosylquinone (Lys-Tyr)) is located at residues 321–356 (KASFCLEDTSCDYGYHRRFACTAHTQGLSPGCYDTY). Residue Y356 is modified to 2',4',5'-topaquinone.

This sequence belongs to the lysyl oxidase family. In terms of assembly, interacts with MFAP4. Interacts (via propeptide) with EFEMP2; this interaction is strong and facilitates formation of ternary complexes with ELN during elastic fiber assembly; this interaction limits interaction of EFEMP2 with FBLN5. The cofactor is Cu cation. It depends on lysine tyrosylquinone residue as a cofactor. In terms of processing, the lysine tyrosylquinone cross-link (LTQ) is generated by condensation of the epsilon-amino group of a lysine with a topaquinone produced by oxidation of tyrosine. Post-translationally, proteolytically cleaved by BMP1 which removes the propeptide. Also proteolytically cleaved by ADAMTS2 and ADAMTS14, but not by ADAMTS3, at an additional cleavage site downstream of the BMP1 cleavage site. The propeptide plays a role in directing the deposition of this enzyme to elastic fibers, via interaction with tropoelastin. Cleavage by BMP1 to remove the propeptide does not increase enzymatic activity but increases binding to collagen. Cleavage by ADAMTS2 produces a form with reduced collagen-binding activity. Sulfated at Tyr-188 and also at either Tyr-184 or Tyr-185 which enhances binding to collagen.

It localises to the secreted. The protein resides in the extracellular space. The catalysed reaction is L-lysyl-[protein] + O2 + H2O = (S)-2-amino-6-oxohexanoyl-[protein] + H2O2 + NH4(+). Its function is as follows. Responsible for the post-translational oxidative deamination of peptidyl lysine residues in precursors to fibrous collagen and elastin. Regulator of Ras expression. May play a role in tumor suppression. Plays a role in the aortic wall architecture. The chain is Protein-lysine 6-oxidase from Bos taurus (Bovine).